A 308-amino-acid chain; its full sequence is uncharacterized protein (308 aa).

The ABC transporter domain occupies 6-234 (LHIEGLDKKI…TEKAIIEVQP (229 aa)). Position 38–45 (38–45 (GPNGSGKT)) interacts with ATP.

It belongs to the ABC transporter superfamily.

This is an uncharacterized protein from Bacillus subtilis (strain 168).